A 136-amino-acid polypeptide reads, in one-letter code: MGEILELTNKNFMSHLKKDITSQESLKSRIEDKNGDVASPKEDNYPLLNETAAWPDGVITSEEGCSSSGEKENSGLCSEESSEEDPEEAEEESARAFGELVAVLRDKDIPLNVLDEPQMKDWLEKYTGVYRSSWHG.

2 disordered regions span residues 23–44 (QESLKSRIEDKNGDVASPKEDN) and 56–95 (DGVITSEEGCSSSGEKENSGLCSEESSEEDPEEAEEESAR). Low complexity predominate over residues 61–79 (SEEGCSSSGEKENSGLCSE). The span at 80-91 (ESSEEDPEEAEE) shows a compositional bias: acidic residues.

This is an uncharacterized protein from Saccharomyces cerevisiae (strain ATCC 204508 / S288c) (Baker's yeast).